A 154-amino-acid chain; its full sequence is Small ribosomal subunit protein bS16 (154 aa).

Residues 111–121 (AAAGLAEAPTK) are compositionally biased toward low complexity. Positions 111-154 (AAAGLAEAPTKPAKKAAKAEAAPKTDEAAPKTEEQAGAGSGEQG) are disordered. The span at 127–144 (AKAEAAPKTDEAAPKTEE) shows a compositional bias: basic and acidic residues.

Belongs to the bacterial ribosomal protein bS16 family.

This Salinispora tropica (strain ATCC BAA-916 / DSM 44818 / JCM 13857 / NBRC 105044 / CNB-440) protein is Small ribosomal subunit protein bS16.